The sequence spans 179 residues: Negative modulator of initiation of replication (179 aa).

The interaction with DNA stretch occupies residues 86-87 (AV).

Belongs to the SeqA family. Homodimer. Polymerizes to form helical filaments.

The protein resides in the cytoplasm. Negative regulator of replication initiation, which contributes to regulation of DNA replication and ensures that replication initiation occurs exactly once per chromosome per cell cycle. Binds to pairs of hemimethylated GATC sequences in the oriC region, thus preventing assembly of replication proteins and re-initiation at newly replicated origins. Repression is relieved when the region becomes fully methylated. This chain is Negative modulator of initiation of replication, found in Shewanella woodyi (strain ATCC 51908 / MS32).